Here is a 228-residue protein sequence, read N- to C-terminus: ATP-dependent dethiobiotin synthetase BioD (228 aa).

An ATP-binding site is contributed by 12–17; the sequence is EIGKTT. Residue Thr-16 coordinates Mg(2+). The active site involves Lys-37. Ser-41 contributes to the substrate binding site. ATP-binding positions include Asp-54, 116–119, and 205–207; these read EGAG and PRL. The Mg(2+) site is built by Asp-54 and Glu-116.

Belongs to the dethiobiotin synthetase family. In terms of assembly, homodimer. Mg(2+) is required as a cofactor.

The protein resides in the cytoplasm. It catalyses the reaction (7R,8S)-7,8-diammoniononanoate + CO2 + ATP = (4R,5S)-dethiobiotin + ADP + phosphate + 3 H(+). It functions in the pathway cofactor biosynthesis; biotin biosynthesis; biotin from 7,8-diaminononanoate: step 1/2. Its function is as follows. Catalyzes a mechanistically unusual reaction, the ATP-dependent insertion of CO2 between the N7 and N8 nitrogen atoms of 7,8-diaminopelargonic acid (DAPA, also called 7,8-diammoniononanoate) to form a ureido ring. The chain is ATP-dependent dethiobiotin synthetase BioD from Pseudomonas paraeruginosa (strain DSM 24068 / PA7) (Pseudomonas aeruginosa (strain PA7)).